The sequence spans 767 residues: Two-component response regulator-like PRR73 (767 aa).

The interval 1–64 (MGSACEAGTD…EPQQTDEQKE (64 aa)) is disordered. Residues 82-200 (RVLLVENDDS…ELKNLWQHVW (119 aa)) form the Response regulatory domain. Positions 205 to 214 (SSSGSGSESG) are enriched in low complexity. Disordered regions lie at residues 205 to 272 (SSSG…QSSW), 312 to 388 (RWLP…NEPT), 476 to 546 (ASNQ…RGKV), 646 to 701 (ANYS…SGSG), and 727 to 767 (NFGK…DEDR). The span at 238–252 (DNEDDDDNDEDDDDL) shows a compositional bias: acidic residues. Composition is skewed to polar residues over residues 263 to 272 (DNGSGTQSSW), 343 to 361 (RNSSMEYQSSPREMSVNPT), and 488 to 497 (CSPQDNSSEA). Residues 518-531 (GSNGSSNNNDMGSS) are compositionally biased toward low complexity. Residues 532-543 (TKNAITKPSSNR) are compositionally biased toward polar residues. Residues 689-700 (GAGGGNGSGSGS) are compositionally biased toward gly residues. Positions 712 to 754 (REAALNKFRQKRKVRNFGKKVRYQSRKRLAEQRPRIRGQFVRQ) constitute a CCT domain. Positions 727 to 738 (NFGKKVRYQSRK) are enriched in basic residues.

The protein belongs to the ARR-like family.

The protein resides in the nucleus. In terms of biological role, controls photoperiodic flowering response. Seems to be one of the component of the circadian clock. Expression of several members of the ARR-like family is controlled by circadian rhythm. The particular coordinated sequential expression of PRR73, PRR37, PRR95, PRR59 and PPR1 result to circadian waves that may be at the basis of the endogenous circadian clock. This is Two-component response regulator-like PRR73 (PRR73) from Oryza sativa subsp. indica (Rice).